The chain runs to 175 residues: MRRQRSAVPILALLALLALLALIVGLGASGCAWKPPTTRPSPPNTCKDSDGPTADTVRQAIAAVPIVVPGSKWVEITRGHTRNCRLHWVQIIPTIASQSTPQQLLFFDRNIPLGSPTRNPKPYITVLPAGDDTVTVQYQWQIGSDQECCPTGIGTVRFHIGSDGKLEALGSIPHQ.

The first 30 residues, 1–30 (MRRQRSAVPILALLALLALLALIVGLGASG), serve as a signal peptide directing secretion. C31 carries N-palmitoyl cysteine lipidation. The S-diacylglycerol cysteine moiety is linked to residue C31.

It is found in the cell membrane. In Mycobacterium bovis (strain ATCC BAA-935 / AF2122/97), this protein is Putative lipoprotein LppP (lppP).